Consider the following 713-residue polypeptide: Phosphoribosylformylglycinamidine synthase subunit PurL (713 aa).

Over residues 1–17 (MSLSPSDRELVTEELGR) the composition is skewed to basic and acidic residues. Residues 1–20 (MSLSPSDRELVTEELGREPT) are disordered. Residue His34 is part of the active site. Tyr37 contributes to the ATP binding site. Glu85 is a binding site for Mg(2+). Substrate is bound by residues 86–89 (SHNH) and Arg108. The active-site Proton acceptor is His87. Residue Asp109 participates in Mg(2+) binding. Gln233 is a binding site for substrate. Asp261 provides a ligand contact to Mg(2+). 305–307 (ESQ) is a substrate binding site. ATP is bound by residues Asp480 and Gly517. Asn518 serves as a coordination point for Mg(2+). Residue Ser520 participates in substrate binding.

Belongs to the FGAMS family. As to quaternary structure, monomer. Part of the FGAM synthase complex composed of 1 PurL, 1 PurQ and 2 PurS subunits.

It is found in the cytoplasm. It carries out the reaction N(2)-formyl-N(1)-(5-phospho-beta-D-ribosyl)glycinamide + L-glutamine + ATP + H2O = 2-formamido-N(1)-(5-O-phospho-beta-D-ribosyl)acetamidine + L-glutamate + ADP + phosphate + H(+). It functions in the pathway purine metabolism; IMP biosynthesis via de novo pathway; 5-amino-1-(5-phospho-D-ribosyl)imidazole from N(2)-formyl-N(1)-(5-phospho-D-ribosyl)glycinamide: step 1/2. Functionally, part of the phosphoribosylformylglycinamidine synthase complex involved in the purines biosynthetic pathway. Catalyzes the ATP-dependent conversion of formylglycinamide ribonucleotide (FGAR) and glutamine to yield formylglycinamidine ribonucleotide (FGAM) and glutamate. The FGAM synthase complex is composed of three subunits. PurQ produces an ammonia molecule by converting glutamine to glutamate. PurL transfers the ammonia molecule to FGAR to form FGAM in an ATP-dependent manner. PurS interacts with PurQ and PurL and is thought to assist in the transfer of the ammonia molecule from PurQ to PurL. This chain is Phosphoribosylformylglycinamidine synthase subunit PurL, found in Natronomonas pharaonis (strain ATCC 35678 / DSM 2160 / CIP 103997 / JCM 8858 / NBRC 14720 / NCIMB 2260 / Gabara) (Halobacterium pharaonis).